The sequence spans 257 residues: uncharacterized protein (257 aa).

An N-terminal signal peptide occupies residues 1 to 22 (MRYLKRLSWYISILILIVVIAG). C23 is lipidated: N-palmitoyl cysteine. A lipid anchor (S-diacylglycerol cysteine) is attached at C23.

It belongs to the staphylococcal tandem lipoprotein family.

It is found in the cell membrane. This is an uncharacterized protein from Staphylococcus aureus (strain N315).